Here is a 337-residue protein sequence, read N- to C-terminus: DNA-directed RNA polymerase subunit alpha (337 aa).

The segment at 1–233 is alpha N-terminal domain (alpha-NTD); sequence MIQKNWQELI…DQLSIFVNFE (233 aa). Residues 249-337 form an alpha C-terminal domain (alpha-CTD) region; that stretch reads FNPALLKKVD…DLAKRYEDQY (89 aa).

It belongs to the RNA polymerase alpha chain family. As to quaternary structure, homodimer. The RNAP catalytic core consists of 2 alpha, 1 beta, 1 beta' and 1 omega subunit. When a sigma factor is associated with the core the holoenzyme is formed, which can initiate transcription.

The enzyme catalyses RNA(n) + a ribonucleoside 5'-triphosphate = RNA(n+1) + diphosphate. DNA-dependent RNA polymerase catalyzes the transcription of DNA into RNA using the four ribonucleoside triphosphates as substrates. The sequence is that of DNA-directed RNA polymerase subunit alpha from Brucella suis (strain ATCC 23445 / NCTC 10510).